Here is a 56-residue protein sequence, read N- to C-terminus: Ovomucoid (56 aa).

The region spanning 6–56 (VDCSEYPKPDCTLEYRPLCGSDNKTYASKCNFCNAVVESNGTLTLSHFGKC) is the Kazal-like domain. 3 disulfides stabilise this stretch: C8/C38, C16/C35, and C24/C56. N-linked (GlcNAc...) asparagine glycosylation is present at N45.

It localises to the secreted. This chain is Ovomucoid, found in Callipepla squamata pallida (Blue scaled quail).